The following is a 311-amino-acid chain: Methionyl-tRNA formyltransferase (311 aa).

Position 109–112 (109–112) interacts with (6S)-5,6,7,8-tetrahydrofolate; it reads SLLP.

Belongs to the Fmt family.

It carries out the reaction L-methionyl-tRNA(fMet) + (6R)-10-formyltetrahydrofolate = N-formyl-L-methionyl-tRNA(fMet) + (6S)-5,6,7,8-tetrahydrofolate + H(+). Functionally, attaches a formyl group to the free amino group of methionyl-tRNA(fMet). The formyl group appears to play a dual role in the initiator identity of N-formylmethionyl-tRNA by promoting its recognition by IF2 and preventing the misappropriation of this tRNA by the elongation apparatus. The protein is Methionyl-tRNA formyltransferase of Kosmotoga olearia (strain ATCC BAA-1733 / DSM 21960 / TBF 19.5.1).